Consider the following 389-residue polypeptide: Phosphopentomutase (389 aa).

The Mn(2+) site is built by D9, D282, H287, D323, H324, and H335.

The protein belongs to the phosphopentomutase family. Mn(2+) serves as cofactor.

The protein resides in the cytoplasm. It catalyses the reaction 2-deoxy-alpha-D-ribose 1-phosphate = 2-deoxy-D-ribose 5-phosphate. It carries out the reaction alpha-D-ribose 1-phosphate = D-ribose 5-phosphate. Its pathway is carbohydrate degradation; 2-deoxy-D-ribose 1-phosphate degradation; D-glyceraldehyde 3-phosphate and acetaldehyde from 2-deoxy-alpha-D-ribose 1-phosphate: step 1/2. Its function is as follows. Isomerase that catalyzes the conversion of deoxy-ribose 1-phosphate (dRib-1-P) and ribose 1-phosphate (Rib-1-P) to deoxy-ribose 5-phosphate (dRib-5-P) and ribose 5-phosphate (Rib-5-P), respectively. This is Phosphopentomutase from Kosmotoga olearia (strain ATCC BAA-1733 / DSM 21960 / TBF 19.5.1).